The following is a 224-amino-acid chain: Putative tyrosine-protein phosphatase OCA6 (224 aa).

Thr-2 carries the phosphothreonine modification. The Tyrosine-protein phosphatase domain maps to 8–170 (QFSTVQPNLY…FNSEIEVDDL (163 aa)). Cys-114 serves as the catalytic Phosphocysteine intermediate.

The protein belongs to the protein-tyrosine phosphatase family.

It localises to the cytoplasm. It catalyses the reaction O-phospho-L-tyrosyl-[protein] + H2O = L-tyrosyl-[protein] + phosphate. Its function is as follows. Required for replication of Brome mosaic virus (BMV). This Saccharomyces cerevisiae (strain ATCC 204508 / S288c) (Baker's yeast) protein is Putative tyrosine-protein phosphatase OCA6 (OCA6).